The primary structure comprises 505 residues: Midnolin (505 aa).

One can recognise a Ubiquitin-like domain in the interval Met-32–Gly-106. Disordered stretches follow at residues Pro-155 to Phe-176, Ser-228 to Pro-305, and Arg-440 to Phe-485. The segment covering Arg-238–Val-262 has biased composition (low complexity). Residues Thr-263–Cys-282 are compositionally biased toward polar residues. Low complexity predominate over residues Ser-283–Pro-300.

Interacts with GCK; the interaction occurs preferentially at low glucose levels. Interacts with the proteasome.

The protein localises to the nucleus. The protein resides in the cytoplasm. It localises to the cytosol. It is found in the nucleolus. Its function is as follows. Facilitates the ubiquitin-independent proteasomal degradation of stimulus-induced transcription factors such as FOSB, EGR1, NR4A1, and IRF4 to the proteasome for degradation. Promotes also the degradation of other substrates such as CBX4. Plays a role in inhibiting the activity of glucokinase GCK and both glucose-induced and basal insulin secretion. The sequence is that of Midnolin from Rattus norvegicus (Rat).